Consider the following 211-residue polypeptide: N-(5'-phosphoribosyl)anthranilate isomerase (211 aa).

Belongs to the TrpF family.

It carries out the reaction N-(5-phospho-beta-D-ribosyl)anthranilate = 1-(2-carboxyphenylamino)-1-deoxy-D-ribulose 5-phosphate. It functions in the pathway amino-acid biosynthesis; L-tryptophan biosynthesis; L-tryptophan from chorismate: step 3/5. This Zymomonas mobilis subsp. pomaceae (strain ATCC 29192 / DSM 22645 / JCM 10191 / CCUG 17912 / NBRC 13757 / NCIMB 11200 / NRRL B-4491 / Barker I) protein is N-(5'-phosphoribosyl)anthranilate isomerase.